The primary structure comprises 921 residues: MKNNTRFTLIVVGVLFHLLYLWSIFDIYFISPLVHGMEQKISTNNPPAKRLFLIVGDGLRADTTFDKITHPVTKKADYLAPFIRSLVQNNATYGISHTRMPTESRPGHVAMIAGFYEDVSAVTKGWKENPVDFDSFFNQTAHTYSFGSPDILPMFKDGASDPNKVDAWMYGHEYEDFTQSSIELDAYVFRHLDQLFKNSSTDKELDKQIRQDGNAFFLHLLGCDTAGHSYRPYSAEYYDNVIYIDKQVEKLVKQVEEFFGDNDTAFIFTADHGMSAFGSHGDGHPNNTRTPLVAWGAGLNRPVRLDTPEFDEYTENWNLANIKRNDVKQADIAALMSYLIGTNYPANSVGELPLAYIEGSEGQKLEALLNNAESILEQYRVKENEVINSQFVYKIYPKFAEKSPTEYLKEIKELIKKIENGEESLEPEAIRLTEELMKVTLEGLHYLTTYNWRFIRTIVTFGFLGWICYSFMIFLKLFILNNSQTTHPSILNISIFTSLGLILNYILFYQKSPLNFYLYLIFPLFFWSKIFSNTAIIRDGVNEFFKGISKAESVIIGLTIISIYEGIVYGFFHRWILSLILVSFAFYPLVCGVTDLFTNLLWILTSVGLSSFTLLDAVKIENLQQIQVAGILIVLSSAYAVMRLSQDISKYTQHLLSIQIFLVSGMLHFTSKSVISLQKREGLPAFAQVGGWAILVISLTIMPFLHYLKPNNNYQVRLLTIYLTFAPSFIILSISFEALFYFIFTAYIVQWLQIEKNIKVLKDEQKSDSNGIQLLRVAIIGFFLQQIAFFGTGNVASISSFSLDSVYRLLPVFDPFPMGALLMLKLIIPYVLLSCGLGIMNIQLDIKDYTISSLIISTSDILSLNFFYLLKTEGSWLDIGVTISNYCLAILSSLFMLILEIVGHQLLKNVTRATSSQKKTN.

At 1-9 (MKNNTRFTL) the chain is on the cytoplasmic side. A helical membrane pass occupies residues 10–30 (IVVGVLFHLLYLWSIFDIYFI). The Lumenal portion of the chain corresponds to 31–457 (SPLVHGMEQK…TTYNWRFIRT (427 aa)). 5 N-linked (GlcNAc...) asparagine glycosylation sites follow: asparagine 90, asparagine 138, asparagine 198, asparagine 262, and asparagine 286. The chain crosses the membrane as a helical span at residues 458–478 (IVTFGFLGWICYSFMIFLKLF). Residues 479-488 (ILNNSQTTHP) lie on the Cytoplasmic side of the membrane. The chain crosses the membrane as a helical span at residues 489-509 (SILNISIFTSLGLILNYILFY). Topologically, residues 510–516 (QKSPLNF) are lumenal. The helical transmembrane segment at 517–537 (YLYLIFPLFFWSKIFSNTAII) threads the bilayer. Residues 538 to 552 (RDGVNEFFKGISKAE) lie on the Cytoplasmic side of the membrane. The helical transmembrane segment at 553–573 (SVIIGLTIISIYEGIVYGFFH) threads the bilayer. At 574–575 (RW) the chain is on the lumenal side. A helical membrane pass occupies residues 576–596 (ILSLILVSFAFYPLVCGVTDL). Topologically, residues 597 to 599 (FTN) are cytoplasmic. The chain crosses the membrane as a helical span at residues 600-620 (LLWILTSVGLSSFTLLDAVKI). Glutamate 621 is a topological domain (lumenal). A helical transmembrane segment spans residues 622-642 (NLQQIQVAGILIVLSSAYAVM). Residues 643 to 654 (RLSQDISKYTQH) lie on the Cytoplasmic side of the membrane. A helical membrane pass occupies residues 655 to 675 (LLSIQIFLVSGMLHFTSKSVI). The Lumenal portion of the chain corresponds to 676-684 (SLQKREGLP). The helical transmembrane segment at 685 to 705 (AFAQVGGWAILVISLTIMPFL) threads the bilayer. Over 706 to 728 (HYLKPNNNYQVRLLTIYLTFAPS) the chain is Cytoplasmic. A helical membrane pass occupies residues 729–749 (FIILSISFEALFYFIFTAYIV). Over 750 to 777 (QWLQIEKNIKVLKDEQKSDSNGIQLLRV) the chain is Lumenal. Residues 778–798 (AIIGFFLQQIAFFGTGNVASI) form a helical membrane-spanning segment. At 799-819 (SSFSLDSVYRLLPVFDPFPMG) the chain is on the cytoplasmic side. The helical transmembrane segment at 820-840 (ALLMLKLIIPYVLLSCGLGIM) threads the bilayer. The Lumenal portion of the chain corresponds to 841–849 (NIQLDIKDY). Residues 850 to 870 (TISSLIISTSDILSLNFFYLL) form a helical membrane-spanning segment. At 871–878 (KTEGSWLD) the chain is on the cytoplasmic side. The chain crosses the membrane as a helical span at residues 879–899 (IGVTISNYCLAILSSLFMLIL). Topologically, residues 900 to 921 (EIVGHQLLKNVTRATSSQKKTN) are lumenal. The N-linked (GlcNAc...) asparagine glycan is linked to asparagine 909.

The protein belongs to the PIGG/PIGN/PIGO family. PIGN subfamily.

The protein resides in the endoplasmic reticulum membrane. Its pathway is glycolipid biosynthesis; glycosylphosphatidylinositol-anchor biosynthesis. Ethanolamine phosphate transferase involved in glycosylphosphatidylinositol-anchor biosynthesis. Transfers ethanolamine phosphate to the first alpha-1,4-linked mannose of the glycosylphosphatidylinositol precursor of GPI-anchor. This is GPI ethanolamine phosphate transferase 1 (MCD4) from Candida glabrata (strain ATCC 2001 / BCRC 20586 / JCM 3761 / NBRC 0622 / NRRL Y-65 / CBS 138) (Yeast).